The chain runs to 276 residues: Undecaprenyl-diphosphatase 2 (276 aa).

8 helical membrane passes run 1-21, 44-64, 87-107, 114-134, 150-170, 190-210, 220-240, and 251-271; these read MSLW…LFPV, QLLP…LWYF, GHLM…GLLL, VFHD…LLWV, MTFK…IPGF, AAEF…VLEL, LMDA…SVRF, and LASF…WFML.

The protein belongs to the UppP family.

Its subcellular location is the cell inner membrane. It catalyses the reaction di-trans,octa-cis-undecaprenyl diphosphate + H2O = di-trans,octa-cis-undecaprenyl phosphate + phosphate + H(+). In terms of biological role, catalyzes the dephosphorylation of undecaprenyl diphosphate (UPP). Confers resistance to bacitracin. The protein is Undecaprenyl-diphosphatase 2 of Burkholderia ambifaria (strain ATCC BAA-244 / DSM 16087 / CCUG 44356 / LMG 19182 / AMMD) (Burkholderia cepacia (strain AMMD)).